The sequence spans 566 residues: DNA helicase/primase (566 aa).

The Zn(2+) site is built by C17, C20, C36, and C39. A C4-like; zinc ribbon fold zinc finger spans residues 17–39 (CDNCGSSDGNSLFSDGHTFCYVC). The Toprim domain occupies 151–238 (KKIVVTEGEI…RVAVLPCKDA (88 aa)). 3 residues coordinate Mg(2+): E157, D207, and D237. Residues 281-548 (SEESVGLLFS…TGWLEPSSYS (268 aa)) form the SF4 helicase domain. Position 312-319 (312-319 (SGSGMGKS)) interacts with ATP. Positions 543–566 (EPSSYSGEEESHSESTDWSNDTDF) are disordered. Positions 550–566 (EEESHSESTDWSNDTDF) are binding to viral DNA polymerase.

It belongs to the Teseptimavirus DNA helicase/primase family. As to quaternary structure, homohexamer. Assembles as a hexamer onto linear or circular ssDNA in the presence of ATP or dTTP. Present in a mixture of heptamers and hexamers in the absence of DNA. Interacts (via C-terminus) with the viral DNA polymerase that is bound to DNA; this interaction is essential to initiate leading-strand DNA synthesis. The priming complex consists of 2 DNA polymerases and 1 helicase-primase hexamer that assemble on the DNA template. Interacts with the single-stranded DNA-binding protein. Part of the replicase complex that includes the DNA polymerase, thioredoxin, the primase/helicase and the single-stranded DNA binding protein. The cofactor is Mg(2+).

The enzyme catalyses ATP + H2O = ADP + phosphate + H(+). In terms of biological role, ATP-dependent DNA helicase and primase essential for viral DNA replication and recombination. The helicase moves 5' -&gt; 3' on the lagging strand template, unwinding the DNA duplex ahead of the leading strand polymerase at the replication fork and generating ssDNA for both leading and lagging strand synthesis. ATP or dTTP hydrolysis propels each helicase domain to translocate 2 nt per step sequentially along DNA. Mediates strand transfer when a joint molecule is available and participates in recombinational DNA repair through its role in strand exchange. Primase activity synthesizes short RNA primers at the sequence 5'-GTC-3' on the lagging strand that the polymerase elongates using dNTPs and providing the primase is still present. The sequence is that of DNA helicase/primase from Escherichia phage T7 (Bacteriophage T7).